A 203-amino-acid chain; its full sequence is CS5 fimbrial subunit (203 aa).

A signal peptide spans 1–22; sequence MKKNLLITSVLAMATVSGSVLA.

Its subcellular location is the fimbrium. Functionally, major subunit of fimbriae. Fimbriae (also called pili), are polar filaments radiating from the surface of the bacterium to a length of 0.5-1.5 micrometers and numbering 100-300 per cell. They enable bacteria to colonize the epithelium of specific host organs. In Escherichia coli, this protein is CS5 fimbrial subunit.